Here is a 378-residue protein sequence, read N- to C-terminus: Valine--tRNA ligase (378 aa).

The stretch at 307 to 377 (AGFINKEAEL…IQEQYKAIEA (71 aa)) forms a coiled coil.

The protein belongs to the class-I aminoacyl-tRNA synthetase family. ValS type 1 subfamily. As to quaternary structure, monomer.

It is found in the cytoplasm. The catalysed reaction is tRNA(Val) + L-valine + ATP = L-valyl-tRNA(Val) + AMP + diphosphate. In terms of biological role, catalyzes the attachment of valine to tRNA(Val). As ValRS can inadvertently accommodate and process structurally similar amino acids such as threonine, to avoid such errors, it has a 'posttransfer' editing activity that hydrolyzes mischarged Thr-tRNA(Val) in a tRNA-dependent manner. This chain is Valine--tRNA ligase (valS), found in Haemophilus parainfluenzae.